Here is a 209-residue protein sequence, read N- to C-terminus: NAD(P)H dehydrogenase (quinone) (209 aa).

Positions 4–199 constitute a Flavodoxin-like domain; it reads VNIIFYSMYG…AMARYQGRHV (196 aa). Residues 10–15 and 87–89 each bind FMN; these read SMYGHV and TRY. Y12 is an NAD(+) binding site. W107 provides a ligand contact to substrate. FMN contacts are provided by residues 122 to 128 and H143; that span reads SSGTQHG.

This sequence belongs to the WrbA family. FMN serves as cofactor.

The catalysed reaction is a quinone + NADH + H(+) = a quinol + NAD(+). It carries out the reaction a quinone + NADPH + H(+) = a quinol + NADP(+). This is NAD(P)H dehydrogenase (quinone) from Methanosarcina acetivorans (strain ATCC 35395 / DSM 2834 / JCM 12185 / C2A).